The chain runs to 164 residues: Photosystem II extrinsic protein V (164 aa).

The signal sequence occupies residues 1-27; sequence MNRISIYRIKVLAFLFAVSTYVYPASS. Residues Cys64, Cys67, His68, and His119 each coordinate heme c.

It belongs to the cytochrome c family. PsbV subfamily. As to quaternary structure, PSII is composed of 1 copy each of membrane proteins PsbA, PsbB, PsbC, PsbD, PsbE, PsbF, PsbH, PsbI, PsbJ, PsbK, PsbL, PsbM, PsbT, PsbY, PsbZ, Psb30/Ycf12, at least 3 peripheral proteins of the oxygen-evolving complex and a large number of cofactors. It forms dimeric complexes. The extrinsic subunits in red algae are PsbO (OEC33), PsbQ', cytochrome c-550 and PsbU. Heme c serves as cofactor.

The protein resides in the plastid. The protein localises to the chloroplast thylakoid membrane. In terms of biological role, one of the extrinsic, lumenal subunits of photosystem II (PSII). PSII is a light-driven water plastoquinone oxidoreductase, using light energy to abstract electrons from H(2)O, generating a proton gradient subsequently used for ATP formation. The extrinsic proteins stabilize the structure of photosystem II oxygen-evolving complex (OEC), the ion environment of oxygen evolution and protect the OEC against heat-induced inactivation. The protein is Photosystem II extrinsic protein V of Cyanidium caldarium (Red alga).